A 263-amino-acid polypeptide reads, in one-letter code: TLC domain-containing protein 4 (263 aa).

The next 4 membrane-spanning stretches (helical) occupy residues 7 to 27 (LLIS…YFVS), 53 to 73 (VVST…FLFD), 90 to 110 (VNIA…ILYW), and 124 to 144 (ASLY…IGNF). A TLC domain is found at 44-246 (KKKIEWNSRV…ISKGCIKVIS (203 aa)). Position 165 is an N6-acetyllysine (Lys-165). 2 helical membrane passes run 173–193 (IVIN…ASML) and 211–231 (LGVL…VMNV).

This sequence belongs to the TLCD4 family.

It localises to the membrane. This chain is TLC domain-containing protein 4, found in Homo sapiens (Human).